The sequence spans 262 residues: MSGQTTSEYIGHHLQFLKTGDSFWNVHIDTLFFSVLAAIIFLAVFRSVAKKATSGVPGKLQCMVEILVEWINGIVKENFHGPRNVVAPLALTIFCWVFIMNAIDLIPVDFLPQLAGLFGIHYLRAVPTADISATLGMSLCVFALILFYTVKSKGFGGLVKEYTLHPFNHWSLIPVNFVLESVTLLAKPISLAFRLFGNMYAGELIFILIAVMYSANAAIAALGIPLHLAWAIFHILIVTLQAFIFMMLTVVYLSIAYNKAEH.

Transmembrane regions (helical) follow at residues 25–45 (NVHI…LAVF), 86–106 (VAPL…IDLI), 130–150 (DISA…FYTV), 204–226 (LIFI…GIPL), and 240–260 (LQAF…YNKA).

Belongs to the ATPase A chain family. In terms of assembly, F-type ATPases have 2 components, CF(1) - the catalytic core - and CF(0) - the membrane proton channel. CF(1) has five subunits: alpha(3), beta(3), gamma(1), delta(1), epsilon(1). CF(0) has three main subunits: a(1), b(2) and c(9-12). The alpha and beta chains form an alternating ring which encloses part of the gamma chain. CF(1) is attached to CF(0) by a central stalk formed by the gamma and epsilon chains, while a peripheral stalk is formed by the delta and b chains.

It is found in the cell inner membrane. In terms of biological role, key component of the proton channel; it plays a direct role in the translocation of protons across the membrane. This is ATP synthase subunit a from Mannheimia succiniciproducens (strain KCTC 0769BP / MBEL55E).